The chain runs to 306 residues: Bifunctional protein FolD 1 (306 aa).

Residues 168-170, S193, and I234 each bind NADP(+); that span reads GRS.

This sequence belongs to the tetrahydrofolate dehydrogenase/cyclohydrolase family. Homodimer.

It carries out the reaction (6R)-5,10-methylene-5,6,7,8-tetrahydrofolate + NADP(+) = (6R)-5,10-methenyltetrahydrofolate + NADPH. The catalysed reaction is (6R)-5,10-methenyltetrahydrofolate + H2O = (6R)-10-formyltetrahydrofolate + H(+). The protein operates within one-carbon metabolism; tetrahydrofolate interconversion. Functionally, catalyzes the oxidation of 5,10-methylenetetrahydrofolate to 5,10-methenyltetrahydrofolate and then the hydrolysis of 5,10-methenyltetrahydrofolate to 10-formyltetrahydrofolate. In Rhizobium meliloti (strain 1021) (Ensifer meliloti), this protein is Bifunctional protein FolD 1.